We begin with the raw amino-acid sequence, 211 residues long: ATP phosphoribosyltransferase (211 aa).

This sequence belongs to the ATP phosphoribosyltransferase family. Short subfamily. Heteromultimer composed of HisG and HisZ subunits.

The protein localises to the cytoplasm. It catalyses the reaction 1-(5-phospho-beta-D-ribosyl)-ATP + diphosphate = 5-phospho-alpha-D-ribose 1-diphosphate + ATP. Its pathway is amino-acid biosynthesis; L-histidine biosynthesis; L-histidine from 5-phospho-alpha-D-ribose 1-diphosphate: step 1/9. Its function is as follows. Catalyzes the condensation of ATP and 5-phosphoribose 1-diphosphate to form N'-(5'-phosphoribosyl)-ATP (PR-ATP). Has a crucial role in the pathway because the rate of histidine biosynthesis seems to be controlled primarily by regulation of HisG enzymatic activity. The chain is ATP phosphoribosyltransferase from Pseudomonas fluorescens (strain Pf0-1).